The chain runs to 155 residues: MSRRGTAEEKTAKSDPIYRNRLVNMLVNRILKHGKKSLAYQIIYRALKKIQQKTETNPLSVLRQAICGVTPDIAVKARRVGGSTHQVPIEIGSTQGKALAIRWLLWASRKRPGRNMAFKLSSELVDAAKGSGDAIRKKEETHRMAEANRAFAHFR.

It belongs to the universal ribosomal protein uS7 family. As to quaternary structure, part of the 30S ribosomal subunit.

Its subcellular location is the plastid. It is found in the chloroplast. One of the primary rRNA binding proteins, it binds directly to 16S rRNA where it nucleates assembly of the head domain of the 30S subunit. This is Small ribosomal subunit protein uS7c (rps7) from Hydrastis canadensis (Goldenseal).